The following is a 493-amino-acid chain: Glutamyl-tRNA(Gln) amidotransferase subunit A (493 aa).

Residues Lys78 and Ser158 each act as charge relay system in the active site. Ser182 (acyl-ester intermediate) is an active-site residue.

The protein belongs to the amidase family. GatA subfamily. As to quaternary structure, heterotrimer of A, B and C subunits.

The catalysed reaction is L-glutamyl-tRNA(Gln) + L-glutamine + ATP + H2O = L-glutaminyl-tRNA(Gln) + L-glutamate + ADP + phosphate + H(+). In terms of biological role, allows the formation of correctly charged Gln-tRNA(Gln) through the transamidation of misacylated Glu-tRNA(Gln) in organisms which lack glutaminyl-tRNA synthetase. The reaction takes place in the presence of glutamine and ATP through an activated gamma-phospho-Glu-tRNA(Gln). The protein is Glutamyl-tRNA(Gln) amidotransferase subunit A of Methylorubrum extorquens (strain PA1) (Methylobacterium extorquens).